The sequence spans 498 residues: Glycerol kinase (498 aa).

Thr-11 contacts ADP. ATP-binding residues include Thr-11, Thr-12, and Ser-13. Thr-11 is a binding site for sn-glycerol 3-phosphate. Arg-15 serves as a coordination point for ADP. Residues Arg-81, Glu-82, Tyr-133, and Asp-242 each contribute to the sn-glycerol 3-phosphate site. 5 residues coordinate glycerol: Arg-81, Glu-82, Tyr-133, Asp-242, and Gln-243. ADP contacts are provided by Thr-264 and Gly-307. Residues Thr-264, Gly-307, Gln-311, and Gly-411 each contribute to the ATP site. Residue Gly-411 participates in ADP binding.

Belongs to the FGGY kinase family.

It carries out the reaction glycerol + ATP = sn-glycerol 3-phosphate + ADP + H(+). The protein operates within polyol metabolism; glycerol degradation via glycerol kinase pathway; sn-glycerol 3-phosphate from glycerol: step 1/1. With respect to regulation, inhibited by fructose 1,6-bisphosphate (FBP). In terms of biological role, key enzyme in the regulation of glycerol uptake and metabolism. Catalyzes the phosphorylation of glycerol to yield sn-glycerol 3-phosphate. In Afipia carboxidovorans (strain ATCC 49405 / DSM 1227 / KCTC 32145 / OM5) (Oligotropha carboxidovorans), this protein is Glycerol kinase.